The sequence spans 331 residues: MKKRLAVLLVIVLTITFSFSVTTRIKDIAFFRGARDNQLFGIGLVVGLNGTGDSGNVNSPLLLEMMKKFGVQVSENDLKSKNTALVMVLADIPPFAKEGMRIDCVVASIADAKSLAGGYLLQTPLYGADGKVYAVAQGSVIIGGEDVKLSSNLQKRYRVVGYLLEGAIVERDIPSDMLDGDSVTILLRQPDITTAARVARAINEKFEMDLAKAIDPSAIKLTVPSAFQDDLITFLSLVEEIEVQPDVPARIVVNERTGTVLFGGDVKLSDFVISYGNFTISVTGGKIGDKDATISNLVSALKAAGATPQDIIAILQVIYESGYITGELIIM.

Residues 1 to 23 (MKKRLAVLLVIVLTITFSFSVTT) form the signal peptide.

The basal body constitutes a major portion of the flagellar organelle and consists of four rings (L,P,S, and M) mounted on a central rod.

Its subcellular location is the periplasm. The protein resides in the bacterial flagellum basal body. In terms of biological role, assembles around the rod to form the L-ring and probably protects the motor/basal body from shearing forces during rotation. This is Flagellar P-ring protein (flgI) from Thermotoga maritima (strain ATCC 43589 / DSM 3109 / JCM 10099 / NBRC 100826 / MSB8).